Here is a 380-residue protein sequence, read N- to C-terminus: Queuine tRNA-ribosyltransferase (380 aa).

Catalysis depends on D95, which acts as the Proton acceptor. Substrate-binding positions include D95–F99, D149, Q192, and G219. The segment at G250–S256 is RNA binding. The active-site Nucleophile is D269. Residues T274–R278 are RNA binding; important for wobble base 34 recognition. Residues C307, C309, C312, and H338 each coordinate Zn(2+).

Belongs to the queuine tRNA-ribosyltransferase family. Homodimer. Within each dimer, one monomer is responsible for RNA recognition and catalysis, while the other monomer binds to the replacement base PreQ1. Zn(2+) serves as cofactor.

The catalysed reaction is 7-aminomethyl-7-carbaguanine + guanosine(34) in tRNA = 7-aminomethyl-7-carbaguanosine(34) in tRNA + guanine. It functions in the pathway tRNA modification; tRNA-queuosine biosynthesis. In terms of biological role, catalyzes the base-exchange of a guanine (G) residue with the queuine precursor 7-aminomethyl-7-deazaguanine (PreQ1) at position 34 (anticodon wobble position) in tRNAs with GU(N) anticodons (tRNA-Asp, -Asn, -His and -Tyr). Catalysis occurs through a double-displacement mechanism. The nucleophile active site attacks the C1' of nucleotide 34 to detach the guanine base from the RNA, forming a covalent enzyme-RNA intermediate. The proton acceptor active site deprotonates the incoming PreQ1, allowing a nucleophilic attack on the C1' of the ribose to form the product. After dissociation, two additional enzymatic reactions on the tRNA convert PreQ1 to queuine (Q), resulting in the hypermodified nucleoside queuosine (7-(((4,5-cis-dihydroxy-2-cyclopenten-1-yl)amino)methyl)-7-deazaguanosine). This Geobacillus kaustophilus (strain HTA426) protein is Queuine tRNA-ribosyltransferase.